We begin with the raw amino-acid sequence, 195 residues long: uncharacterized protein (195 aa).

Transmembrane regions (helical) follow at residues 13 to 32 and 42 to 64; these read VIGL…FLVA and LSNS…TILV.

The protein resides in the cell membrane. This is an uncharacterized protein from Archaeoglobus fulgidus (strain ATCC 49558 / DSM 4304 / JCM 9628 / NBRC 100126 / VC-16).